The following is a 381-amino-acid chain: Glycerate 2-kinase (381 aa).

This sequence belongs to the glycerate kinase type-1 family.

It catalyses the reaction (R)-glycerate + ATP = (2R)-2-phosphoglycerate + ADP + H(+). Catalyzes the transfer of the phosphate group from adenosine triphosphate (ATP) to (R)-glycerate to form (2R)-2-phosphoglycerate, an enzymatic step in (L)-glucarate/galactarate catabolic pathway. The sequence is that of Glycerate 2-kinase (garK) from Escherichia coli (strain K12).